Reading from the N-terminus, the 350-residue chain is Ornithine carbamoyltransferase, mitochondrial (350 aa).

A mitochondrion-targeting transit peptide spans 1 to 30; that stretch reads MLHHMRTIINASWRYGNKCIVRQFGFSQTY. Carbamoyl phosphate-binding positions include 86–90, Arg137, and His164; that span reads STRTR. Arg137 contributes to the L-ornithine binding site. L-ornithine is bound by residues Asn195, 259 to 263, 298 to 301, and Arg326; these read DTWVS and HCLP. Cys299 is an active-site residue. Carbamoyl phosphate is bound at residue Arg326.

It belongs to the aspartate/ornithine carbamoyltransferase superfamily. OTCase family. Homotrimer. As to expression, liver.

The protein resides in the mitochondrion matrix. The catalysed reaction is carbamoyl phosphate + L-ornithine = L-citrulline + phosphate + H(+). The protein operates within nitrogen metabolism; urea cycle; L-citrulline from L-ornithine and carbamoyl phosphate: step 1/1. Its function is as follows. OTC is necessary for the tadpoles transition from an ammonotelic, aquatic larva to a ureotelic, terrestrial adult. The sequence is that of Ornithine carbamoyltransferase, mitochondrial from Aquarana catesbeiana (American bullfrog).